The chain runs to 157 residues: Small ribosomal subunit protein uS7 (157 aa).

This sequence belongs to the universal ribosomal protein uS7 family. In terms of assembly, part of the 30S ribosomal subunit. Contacts proteins S9 and S11.

Functionally, one of the primary rRNA binding proteins, it binds directly to 16S rRNA where it nucleates assembly of the head domain of the 30S subunit. Is located at the subunit interface close to the decoding center, probably blocks exit of the E-site tRNA. In Chloroflexus aggregans (strain MD-66 / DSM 9485), this protein is Small ribosomal subunit protein uS7.